The chain runs to 299 residues: ATP phosphoribosyltransferase (299 aa).

This sequence belongs to the ATP phosphoribosyltransferase family. Long subfamily. The cofactor is Mg(2+).

It localises to the cytoplasm. The catalysed reaction is 1-(5-phospho-beta-D-ribosyl)-ATP + diphosphate = 5-phospho-alpha-D-ribose 1-diphosphate + ATP. It functions in the pathway amino-acid biosynthesis; L-histidine biosynthesis; L-histidine from 5-phospho-alpha-D-ribose 1-diphosphate: step 1/9. Feedback inhibited by histidine. In terms of biological role, catalyzes the condensation of ATP and 5-phosphoribose 1-diphosphate to form N'-(5'-phosphoribosyl)-ATP (PR-ATP). Has a crucial role in the pathway because the rate of histidine biosynthesis seems to be controlled primarily by regulation of HisG enzymatic activity. In Shewanella oneidensis (strain ATCC 700550 / JCM 31522 / CIP 106686 / LMG 19005 / NCIMB 14063 / MR-1), this protein is ATP phosphoribosyltransferase.